Consider the following 899-residue polypeptide: Suppressor of glycerol defect protein 1 (899 aa).

Over residues 24-33 (QDERFSISEG) the composition is skewed to basic and acidic residues. 2 disordered regions span residues 24 to 181 (QDER…VSYP) and 248 to 326 (ETNS…DDSE). Basic residues predominate over residues 34 to 49 (KKRRRGNGKHLSRKEK). The segment covering 65 to 77 (REINSSRLKSAPT) has biased composition (polar residues). Over residues 103–126 (DESESNENWDSDEVLTDEVAEESG) the composition is skewed to acidic residues. Composition is skewed to basic and acidic residues over residues 134-143 (ETMKKLESLK), 162-174 (SYEK…RDTN), and 251-264 (SMRK…KAFS). A compositionally biased stretch (acidic residues) spans 265–292 (SDDDLSASDFEDSDGLSESDNDSVADSD). One can recognise an MIF4G domain in the interval 335-540 (SKKVNSSLNK…DTMSDLKNNR (206 aa)). An MI domain is found at 644 to 781 (DIRRAIFISI…KLDVFKHVPF (138 aa)). A Phosphoserine modification is found at Ser-736.

Belongs to the CWC22 family. Interacts with PLC1.

Its subcellular location is the nucleus. It localises to the nucleolus. In terms of biological role, involved in osmoregulatory glycerol response, probably through its interaction with PLC1 which regulates the expression of GDP1. This is Suppressor of glycerol defect protein 1 (SGD1) from Saccharomyces cerevisiae (strain ATCC 204508 / S288c) (Baker's yeast).